The primary structure comprises 174 residues: FMN reductase (NADH) SmoA (174 aa).

This sequence belongs to the non-flavoprotein flavin reductase family.

It catalyses the reaction FMNH2 + NAD(+) = FMN + NADH + 2 H(+). Functionally, part of the sulfoquinovose monooxygenase (sulfo-SMO) pathway, a D-sulfoquinovose degradation pathway that enables the complete utilization of all carbons within sulfoquinovose (SQ) with concomitant production of inorganic sulfite. Catalyzes the NADH-dependent reduction of FMN. FMNH(2) is then transferred to the sulfoquinovose monooxygenase SmoC. The protein is FMN reductase (NADH) SmoA of Agrobacterium fabrum (strain C58 / ATCC 33970) (Agrobacterium tumefaciens (strain C58)).